The chain runs to 258 residues: Imidazole glycerol phosphate synthase subunit HisF (258 aa).

Active-site residues include Asp12 and Asp131.

It belongs to the HisA/HisF family. As to quaternary structure, heterodimer of HisH and HisF.

It is found in the cytoplasm. The catalysed reaction is 5-[(5-phospho-1-deoxy-D-ribulos-1-ylimino)methylamino]-1-(5-phospho-beta-D-ribosyl)imidazole-4-carboxamide + L-glutamine = D-erythro-1-(imidazol-4-yl)glycerol 3-phosphate + 5-amino-1-(5-phospho-beta-D-ribosyl)imidazole-4-carboxamide + L-glutamate + H(+). Its pathway is amino-acid biosynthesis; L-histidine biosynthesis; L-histidine from 5-phospho-alpha-D-ribose 1-diphosphate: step 5/9. IGPS catalyzes the conversion of PRFAR and glutamine to IGP, AICAR and glutamate. The HisF subunit catalyzes the cyclization activity that produces IGP and AICAR from PRFAR using the ammonia provided by the HisH subunit. In Corynebacterium diphtheriae (strain ATCC 700971 / NCTC 13129 / Biotype gravis), this protein is Imidazole glycerol phosphate synthase subunit HisF.